We begin with the raw amino-acid sequence, 2056 residues long: E3 ubiquitin-protein ligase TRIP12 (2056 aa).

Composition is skewed to polar residues over residues 1-10 and 18-27; these read MSSRPNNNPG and RNTAGAQPQE. Residues 1–440 are disordered; that stretch reads MSSRPNNNPG…SGESESDDSE (440 aa). A compositionally biased stretch (basic and acidic residues) spans 39–51; that stretch reads AENKTHSLPESRK. Polar residues-rich tracts occupy residues 58 to 67 and 153 to 168; these read KVQSNTTSGP and SQEQ…STSK. Low complexity-rich tracts occupy residues 213–226 and 234–253; these read LSKL…SAKA and SSSS…VSAA. 2 stretches are compositionally biased toward polar residues: residues 317 to 327 and 363 to 375; these read PGSSKTETSKP and QKTT…TSRR. The segment covering 383–395 has biased composition (basic and acidic residues); that stretch reads AAAEARRQEKMAD. A compositionally biased stretch (low complexity) spans 415–433; it reads GAAASSSVAGAVGMTTSGE. The WWE domain occupies 791 to 905; that stretch reads MLKKGNAQNT…DPELAKSFIK (115 aa). Residues 1027-1042 show a composition bias toward low complexity; sequence TTISTGSGTASGNSAA. Disordered stretches follow at residues 1027 to 1147, 1465 to 1500, and 1632 to 1651; these read TTIS…ASKD, EEEE…DELW, and TNPE…PRLD. A compositionally biased stretch (basic residues) spans 1069-1082; the sequence is KRKRLPKRGPRRPK. Basic and acidic residues predominate over residues 1085-1094; that stretch reads PPRDEDKVDN. 2 stretches are compositionally biased toward polar residues: residues 1095–1106 and 1119–1129; these read QAKSPTTTQSPK and RLSTQSNSNNI. A K-box region spans residues 1560–1634; sequence EIIPTSEFNN…AMQRLLDTNP (75 aa). The 108-residue stretch at 1949-2056 folds into the HECT domain; it reads PDHGYTHDSR…REGQQSFHLS (108 aa). Cys2023 functions as the Glycyl thioester intermediate in the catalytic mechanism.

Belongs to the UPL family. K-HECT subfamily.

Its subcellular location is the nucleus. It localises to the nucleoplasm. The enzyme catalyses S-ubiquitinyl-[E2 ubiquitin-conjugating enzyme]-L-cysteine + [acceptor protein]-L-lysine = [E2 ubiquitin-conjugating enzyme]-L-cysteine + N(6)-ubiquitinyl-[acceptor protein]-L-lysine.. Its pathway is protein modification; protein ubiquitination. E3 ubiquitin-protein ligase involved in ubiquitin fusion degradation (UFD) pathway and regulation of DNA repair. Part of the ubiquitin fusion degradation (UFD) pathway, a process that mediates ubiquitination of protein at their N-terminus, regardless of the presence of lysine residues in target proteins. Acts as a key regulator of DNA damage response by acting as a suppressor of RNF168, an E3 ubiquitin-protein ligase that promotes accumulation of 'Lys-63'-linked histone H2A and H2AX at DNA damage sites, thereby acting as a guard against excessive spreading of ubiquitinated chromatin at damaged chromosomes. The sequence is that of E3 ubiquitin-protein ligase TRIP12 (trip12) from Xenopus tropicalis (Western clawed frog).